The chain runs to 1071 residues: Kinesin-like protein KIN-14J (1071 aa).

The Calponin-homology (CH) domain maps to 39–142 (KKGHQSLVEW…SLKALKASFS (104 aa)). Residues 157-181 (WSLPEDHSDSRGDDRNFTDGFQSKE) form a disordered region. Basic and acidic residues predominate over residues 158-173 (SLPEDHSDSRGDDRNF). The stretch at 299-389 (EKTRIEEKER…ELEKLCQSKS (91 aa)) forms a coiled coil. In terms of domain architecture, Kinesin motor spans 472 to 800 (NIRVYCRIRP…LKFAERVSGV (329 aa)). Position 556–563 (556–563 (GQTGSGKT)) interacts with ATP. The stretch at 811–844 (GRDVRQLMEQVSNLKDVIAKKDEELQNFQKVKGN) forms a coiled coil. Disordered stretches follow at residues 852 to 931 (GLSN…AAKG) and 995 to 1071 (ARMT…NRRR). Composition is skewed to basic and acidic residues over residues 910-921 (SDERKHQKDYHQ) and 995-1017 (ARMT…KDRT). Polar residues predominate over residues 1034–1049 (TRPSRLSIATSSSSKA).

This sequence belongs to the TRAFAC class myosin-kinesin ATPase superfamily. Kinesin family. KIN-14 subfamily.

The protein is Kinesin-like protein KIN-14J of Arabidopsis thaliana (Mouse-ear cress).